A 259-amino-acid chain; its full sequence is 3'-5' ssDNA/RNA exonuclease TatD (259 aa).

Positions 92, 128, and 153 each coordinate a divalent metal cation.

It belongs to the metallo-dependent hydrolases superfamily. TatD-type hydrolase family. TatD subfamily. Monomer. Mg(2+) is required as a cofactor.

It is found in the cytoplasm. 3'-5' exonuclease that prefers single-stranded DNA and RNA. May play a role in the H(2)O(2)-induced DNA damage repair. This Erwinia amylovora (strain ATCC 49946 / CCPPB 0273 / Ea273 / 27-3) protein is 3'-5' ssDNA/RNA exonuclease TatD.